Here is a 130-residue protein sequence, read N- to C-terminus: Small ribosomal subunit protein uS9 (130 aa).

It belongs to the universal ribosomal protein uS9 family.

The sequence is that of Small ribosomal subunit protein uS9 from Hamiltonella defensa subsp. Acyrthosiphon pisum (strain 5AT).